Reading from the N-terminus, the 446-residue chain is StAR-related lipid transfer protein 3 (446 aa).

Residues 1–52 are Cytoplasmic-facing; that stretch reads MSKRPGDLACDLERSLPALASLGTSLSHSQSLSSHFIPPPLEKRRAISDVRR. In terms of domain architecture, MENTAL spans 47-218; it reads ISDVRRTFCL…YSPPESFAGS (172 aa). The chain crosses the membrane as a helical span at residues 53 to 73; it reads TFCLFVTFDLLFISLLWIIEL. Over 74–95 the chain is Extracellular; that stretch reads NTNTGIRKNLEQEVIHYSFQSS. The chain crosses the membrane as a helical span at residues 96-116; it reads FFDIFVLAFFRFSGLLLGYAV. Topologically, residues 117 to 121 are cytoplasmic; the sequence is LRLQH. Residues 122-142 form a helical membrane-spanning segment; that stretch reads WWVIAVTTLVSSAFLIVKVIL. Over 143 to 149 the chain is Extracellular; that stretch reads SELLSKG. Residues 150–170 form a helical membrane-spanning segment; that stretch reads AFGYLLPIVSFVLAWLETWFL. Topologically, residues 171–446 are cytoplasmic; the sequence is DFKVLPQEAE…QRVGELGARA (276 aa). An FFAT motif is present at residues 207–213; the sequence is QFYSPPE. 3 positions are modified to phosphoserine: Ser210, Ser218, and Ser222. The START domain occupies 231-444; that stretch reads SFSAQEREYI…LRQRVGELGA (214 aa).

The protein belongs to the STARD3 family. As to quaternary structure, homodimer. Interacts (via the MENTAL domain) with STARD3NL. Interacts (via phosphorylated FFAT motif) with VAPA (via MSP domain). Interacts (via phosphorylated FFAT motif) with VAPB (via MSP domain). Interacts (via phosphorylated FFAT motif) with MOSPD2 (via MSP domain); this interaction allows enrichment of MOSPD2 around endosomes. In terms of processing, phosphorylation at Ser-210 is necessary and sufficient for the direct interaction of the phosphorylated FFAT motif with the MSP domain of MOSPD2, VAPA and VAPB and allows the tethering of two membranes that participates in the formation of ER-endosome contacts. Phosphorylation of the FFAT motif leads to conformation changes. Additional phosphorylations around the core FFAT motif (QFYSPPE) are not essential but strengthen the interaction with MOSPD2, VAPA and VAPB. Phosphorylation at Ser-210 of FFAT motif drives membrane tethering between the endoplasmic reticulum and late endosomes via interaction with VAPA and VAPB that in turn allows the efficient transport of sterol mediated by the START domain.

The protein localises to the late endosome membrane. It carries out the reaction cholesterol(in) = cholesterol(out). Functionally, sterol-binding protein that mediates cholesterol transport from the endoplasmic reticulum to endosomes. The sterol transport mechanism is triggered by phosphorylation of FFAT motif that leads to membrane tethering between the endoplasmic reticulum and late endosomes via interaction with VAPA and VAPB. Acts as a lipid transfer protein that redirects sterol to the endosome at the expense of the cell membrane and favors membrane formation inside endosomes. May also mediate cholesterol transport between other membranes, such as mitochondria membrane or cell membrane. However, such results need additional experimental evidences; probably mainly mediates cholesterol transport from the endoplasmic reticulum to endosomes. Does not activate transcriptional cholesterol sensing. Able to bind other lipids, such as lutein, a xanthophyll carotenoids that form the macular pigment of the retina. The sequence is that of StAR-related lipid transfer protein 3 from Mus musculus (Mouse).